The sequence spans 176 residues: MKGFGLAFGLFSAVGFLLWTPLTGLKTLHLGSCVITANLQAIQKEFSEIRDSVQAEDTNIDIRILRTTESLKDIKSLDRCCFLRHLVRFYLDRVFKVYQTPDHHTLRKISSLANSFLIIKKDLSVCHSHMACHCGEEAMEKYNQILSHFIELELQAAVVKALGELGILLRWMEEML.

Residues 1–24 (MKGFGLAFGLFSAVGFLLWTPLTG) form the signal peptide. 3 cysteine pairs are disulfide-bonded: Cys33–Cys126, Cys80–Cys132, and Cys81–Cys134.

The protein belongs to the IL-10 family. As to quaternary structure, forms a 1:1:1 heterotrimeric complex with its primary high-affinity heterodimeric receptor IL20RA/IL20RB.

The protein resides in the secreted. Its function is as follows. Pro-inflammatory and angiogenic cytokine mainly secreted by monocytes and skin keratinocytes that plays crucial roles in immune responses, regulation of inflammatory responses, hemopoiesis, as well as epidermal cell and keratinocyte differentiation. Enhances tissue remodeling and wound-healing activities and restores the homeostasis of epithelial layers during infection and inflammatory responses to maintain tissue integrity. Affects multiple actin-mediated functions in activated neutrophils leading to inhibition of phagocytosis, granule exocytosis, and migration. Exert its effects via the type I IL-20 receptor complex consisting of IL20RA and IL20RB. Alternatively, can mediate its activity through a second receptor complex called type II IL-20 receptor complex composed of IL22RA1 and IL20RB. Acts as an arteriogenic and vascular remodeling factory by activating a range of signaling processes including phosphorylations of JAK2 and STAT5 as well as activation of the serine and threonine kinases AKT and ERK1/2. Alternatively, can activate STAT3 phosphorylation and transcriptional activity in a JAK2, ERK1/2 and p38 MAPK-dependent manner in keratinocytes. The sequence is that of Interleukin-20 (Il20) from Mus musculus (Mouse).